The chain runs to 309 residues: MKHGILVAYKPKGPTSHDVVDEVRKKLKTRKVGHGGTLDPFACGVLIIGVNQGTRILEFYKDLKKVYWVKMRLGLITETFDITGEVVEERECNATEEEIREAIFSFVGEYDQVPPAYSAKKHKGERLYKLAREGKIINLPPKRVKIFKIWDVNVEGRDVSFRAEVSPGTYIRSLCMDIGYKLGCGATAVELVRESVGSYTIEESLNVFEAAPEEIENRIIPLEKCLEWLPRVVVHQESTKTILNGSQIHLEMLKEWDGFKKGEVVRVFNEEGRLLALAEAERNSSFLETLRKHERNERVLTLRKVFNTR.

The active-site Nucleophile is the aspartate 39. The PUA domain maps to leucine 229–phenylalanine 306.

It belongs to the pseudouridine synthase TruB family. Type 1 subfamily.

It carries out the reaction uridine(55) in tRNA = pseudouridine(55) in tRNA. Its function is as follows. Responsible for synthesis of pseudouridine from uracil-55 in the psi GC loop of transfer RNAs. This chain is tRNA pseudouridine synthase B, found in Thermotoga petrophila (strain ATCC BAA-488 / DSM 13995 / JCM 10881 / RKU-1).